The following is a 161-amino-acid chain: MSIVTKSIVNADAEARYLSPGELDRIKSFVTSGERRVRIAETMTGARERIIKEAGNQLFQKRPDVVSPGGNAYGEEMTATCLRDLDYYLRLITYGIVAGDVTPIEEIGVVGVREMYKSLGTPIEAVAEGVRAMKSVATSLLSGEDAAEAGAYFDYLIGAMS.

N4-methylasparagine is present on asparagine 71. (2R,3E)-phycocyanobilin is bound at residue cysteine 81.

It belongs to the phycobiliprotein family. Component of the phycobilisome. Heterodimer of an alpha and a beta chain. Post-translationally, contains one covalently linked phycocyanobilin chromophore.

It is found in the cellular thylakoid membrane. In terms of biological role, light-harvesting photosynthetic bile pigment-protein from the phycobiliprotein complex. Allophycocyanin has a maximum absorption at approximately 650 nanometers. The chain is Allophycocyanin alpha chain (apcA) from Arthrospira platensis (Spirulina platensis).